The primary structure comprises 122 residues: Large ribosomal subunit protein bL12 (122 aa).

The protein belongs to the bacterial ribosomal protein bL12 family. Homodimer. Part of the ribosomal stalk of the 50S ribosomal subunit. Forms a multimeric L10(L12)X complex, where L10 forms an elongated spine to which 2 to 4 L12 dimers bind in a sequential fashion. Binds GTP-bound translation factors.

Forms part of the ribosomal stalk which helps the ribosome interact with GTP-bound translation factors. Is thus essential for accurate translation. This Actinobacillus succinogenes (strain ATCC 55618 / DSM 22257 / CCUG 43843 / 130Z) protein is Large ribosomal subunit protein bL12.